A 233-amino-acid chain; its full sequence is Ribose-5-phosphate isomerase A (233 aa).

Substrate-binding positions include 31-34 (SGST), 87-90 (DGAD), and 100-103 (KGGG). The active-site Proton acceptor is the Glu-109. Lys-127 provides a ligand contact to substrate.

This sequence belongs to the ribose 5-phosphate isomerase family. As to quaternary structure, homodimer.

It catalyses the reaction aldehydo-D-ribose 5-phosphate = D-ribulose 5-phosphate. It functions in the pathway carbohydrate degradation; pentose phosphate pathway; D-ribose 5-phosphate from D-ribulose 5-phosphate (non-oxidative stage): step 1/1. In terms of biological role, catalyzes the reversible conversion of ribose-5-phosphate to ribulose 5-phosphate. This is Ribose-5-phosphate isomerase A from Chlamydia felis (strain Fe/C-56) (Chlamydophila felis).